A 480-amino-acid chain; its full sequence is NADH-quinone oxidoreductase subunit N 1 (480 aa).

14 consecutive transmembrane segments (helical) span residues 12–32 (LSMPELILAVGAMALLMIGVF), 38–58 (TPTVTGLAVAVLIIAGLWLVL), 78–98 (FMKVLALIGSITVMVMTVGHA), 106–126 (FEFPVLLVLATLGMLLMISAN), 128–148 (LISLYLSLELQSLALYVVAAI), 163–183 (FVLGALSSGMMLYGMSLVYGF), 203–223 (LGLVFGLVFILAGLAFKISAV), 241–261 (TAFFAAGPKVAAISILVRIVI), 271–291 (WQQIIVFISIASMLLGSFAAI), 303–323 (SSIGHMGYALVGLAAGSMAGV), 326–346 (VILYMLIYMVMTLGTFACILA), 372–392 (ATVLTILMFSLAGIPPLAGFF), 396–416 (FVFVAAIEAQLYGLAIIGVLA), and 449–469 (LVFGLSGLFVLGYVLIGGPLG).

Belongs to the complex I subunit 2 family. In terms of assembly, NDH-1 is composed of 14 different subunits. Subunits NuoA, H, J, K, L, M, N constitute the membrane sector of the complex.

The protein localises to the cell inner membrane. The catalysed reaction is a quinone + NADH + 5 H(+)(in) = a quinol + NAD(+) + 4 H(+)(out). NDH-1 shuttles electrons from NADH, via FMN and iron-sulfur (Fe-S) centers, to quinones in the respiratory chain. The immediate electron acceptor for the enzyme in this species is believed to be ubiquinone. Couples the redox reaction to proton translocation (for every two electrons transferred, four hydrogen ions are translocated across the cytoplasmic membrane), and thus conserves the redox energy in a proton gradient. The polypeptide is NADH-quinone oxidoreductase subunit N 1 (Rhizobium meliloti (strain 1021) (Ensifer meliloti)).